Here is an 899-residue protein sequence, read N- to C-terminus: Periodic tryptophan protein 2 homolog (899 aa).

WD repeat units lie at residues 9 to 52, 53 to 92, 94 to 132, 149 to 188, 193 to 232, 252 to 291, 294 to 334, 337 to 376, 379 to 418, 422 to 464, 465 to 504, 507 to 546, and 569 to 608; these read NLLG…TLPF, SHRK…VLYH, SFKA…DANA, QHFD…GFTP, GHRQ…GQDE, QNSA…MIHT, ISQN…YILK, GHFD…CIVT, EHTS…NFRT, PERL…DRLS, GHEG…QTSE, QLNS…QQAG, and AGTK…LLKK. The interval 639–668 is disordered; sequence DEQGEASDFEDRIDRSLPGSKRGDPSARRK. A compositionally biased stretch (basic and acidic residues) spans 647 to 668; the sequence is FEDRIDRSLPGSKRGDPSARRK. A WD 14 repeat occupies 669-709; it reads NPEVRVNGVAFSPNGSAFCAASTEGLLIYSLDTTIQFDPFD. The segment at 866–899 is disordered; that stretch reads TGSDEQPGAGGMSLNDVMQQDEGNASEDEWIGLV. Residues 889-899 show a composition bias toward acidic residues; the sequence is NASEDEWIGLV.

Belongs to the WD repeat PWP2 family.

The protein is Periodic tryptophan protein 2 homolog of Neurospora crassa (strain ATCC 24698 / 74-OR23-1A / CBS 708.71 / DSM 1257 / FGSC 987).